A 218-amino-acid chain; its full sequence is Monomethylamine corrinoid protein 1 (218 aa).

The 91-residue stretch at 1–91 folds into the B12-binding N-terminal domain; that stretch reads MANQEIFDKL…ELEKTKVEGE (91 aa). In terms of domain architecture, B12-binding spans 94 to 218; it reads TGLAITFVAE…AAKVALNIMK (125 aa). Residue His-107 coordinates methylcob(III)alamin.

This sequence belongs to the methylamine corrinoid protein family. As to quaternary structure, can form a complex with MtmB.

It participates in one-carbon metabolism; methanogenesis from methylamine. In terms of biological role, acts as a methyl group carrier between MtmB and MtbA. The chain is Monomethylamine corrinoid protein 1 (mtmC1) from Methanosarcina mazei (strain ATCC BAA-159 / DSM 3647 / Goe1 / Go1 / JCM 11833 / OCM 88) (Methanosarcina frisia).